The chain runs to 1435 residues: Trafficking protein particle complex subunit 8 (1435 aa).

Phosphoserine is present on residues Ser273, Ser279, and Ser309. Residues 301–321 form a disordered region; the sequence is QLEQSSDPSNSIDGPDHLRSA. A compositionally biased stretch (polar residues) spans 302-312; that stretch reads LEQSSDPSNSI.

The protein belongs to the TRS85 family. As to quaternary structure, component of the multisubunit TRAPP (transport protein particle) complex, which includes TRAPPC2, TRAPPC2L, TRAPPC3, TRAPPC3L, TRAPPC4, TRAPPC5, TRAPPC8, TRAPPC9, TRAPPC10, TRAPPC11 and TRAPPC12. Interacts with TBC1D14. Interacts (via C-terminus) with TMEM131 (via C-terminus); the interaction is direct and is involved in collagen secretion.

It localises to the golgi apparatus. Its subcellular location is the cis-Golgi network. Functionally, plays a role in endoplasmic reticulum to Golgi apparatus trafficking at a very early stage. Maintains together with TBC1D14 the cycling pool of ATG9 required for initiation of autophagy. Involved in collagen secretion. The protein is Trafficking protein particle complex subunit 8 (TRAPPC8) of Homo sapiens (Human).